The primary structure comprises 191 residues: Peptidyl-tRNA hydrolase (191 aa).

Residue Y14 coordinates tRNA. The Proton acceptor role is filled by H19. Residues F64, N66, and N112 each coordinate tRNA.

This sequence belongs to the PTH family. In terms of assembly, monomer.

The protein localises to the cytoplasm. The enzyme catalyses an N-acyl-L-alpha-aminoacyl-tRNA + H2O = an N-acyl-L-amino acid + a tRNA + H(+). Hydrolyzes ribosome-free peptidyl-tRNAs (with 1 or more amino acids incorporated), which drop off the ribosome during protein synthesis, or as a result of ribosome stalling. Its function is as follows. Catalyzes the release of premature peptidyl moieties from peptidyl-tRNA molecules trapped in stalled 50S ribosomal subunits, and thus maintains levels of free tRNAs and 50S ribosomes. This Novosphingobium aromaticivorans (strain ATCC 700278 / DSM 12444 / CCUG 56034 / CIP 105152 / NBRC 16084 / F199) protein is Peptidyl-tRNA hydrolase.